Here is a 213-residue protein sequence, read N- to C-terminus: Leucyl/phenylalanyl-tRNA--protein transferase (213 aa).

The protein belongs to the L/F-transferase family.

It localises to the cytoplasm. The catalysed reaction is N-terminal L-lysyl-[protein] + L-leucyl-tRNA(Leu) = N-terminal L-leucyl-L-lysyl-[protein] + tRNA(Leu) + H(+). It catalyses the reaction N-terminal L-arginyl-[protein] + L-leucyl-tRNA(Leu) = N-terminal L-leucyl-L-arginyl-[protein] + tRNA(Leu) + H(+). The enzyme catalyses L-phenylalanyl-tRNA(Phe) + an N-terminal L-alpha-aminoacyl-[protein] = an N-terminal L-phenylalanyl-L-alpha-aminoacyl-[protein] + tRNA(Phe). Its function is as follows. Functions in the N-end rule pathway of protein degradation where it conjugates Leu, Phe and, less efficiently, Met from aminoacyl-tRNAs to the N-termini of proteins containing an N-terminal arginine or lysine. The protein is Leucyl/phenylalanyl-tRNA--protein transferase of Rhodospirillum rubrum (strain ATCC 11170 / ATH 1.1.1 / DSM 467 / LMG 4362 / NCIMB 8255 / S1).